Here is a 597-residue protein sequence, read N- to C-terminus: MSILQKLENSAAAAVKALYGTDPMEGQIQLQKTKREFKGHLTLVVFPFVKMSRKSPEATATEIGEWLLANESAVSAIEVVKGFLNLTIAPRVWLELLNEIRADINFGHKVATEDSPLVMVEYSSPNTNKPLHLGHVRNNLLGYSLSEIMKANGYRVVKTNIVNDRGIHICKSMLAWQKWGDGVTPEKAGKKGDHLIGDFYVLFDKHYKAELNSLMAEGKSKEEAEAASTLMAEAREMLRLWEAGDEKVVDLWRTMNQWVYDGFDATYKMMGVDFDKIYYESETYLVGKEEVLRGLEEGLFVKHSDGSVWADLTKDGLDEKLLLRADGTSVYMTQDIGTAKMRFNDYPINRMIYVVGNEQNYHFQVLSILLDRLGFEFGKGLVHFSYGMVELPEGKMKSREGTVVDADDLMDEMIRTAAEIAAEAGKAAEMDEEESREVARIVGLGSLKYFILKVDPRKNMTFNPKESIDFNGNTGSFVQYTYARIRSLMRRAEAAGYDIPSQLPTDLPLSEKEEALIQKVSEYAEVVSEAGHSYSPALIANYIYDLVKEYNQFYHDFSVLKEEDERIRAFRLALSEVVALTMRKGFALLGIEMPERM.

A 'HIGH' region motif is present at residues 125–135; sequence PNTNKPLHLGH.

Belongs to the class-I aminoacyl-tRNA synthetase family. Monomer.

The protein resides in the cytoplasm. It catalyses the reaction tRNA(Arg) + L-arginine + ATP = L-arginyl-tRNA(Arg) + AMP + diphosphate. In Porphyromonas gingivalis (strain ATCC BAA-308 / W83), this protein is Arginine--tRNA ligase.